The sequence spans 286 residues: 4-diphosphocytidyl-2-C-methyl-D-erythritol kinase (286 aa).

The active site involves Lys-13. 99 to 109 (PMGGGLGGGSS) is an ATP binding site. Asp-141 is a catalytic residue.

Belongs to the GHMP kinase family. IspE subfamily.

The catalysed reaction is 4-CDP-2-C-methyl-D-erythritol + ATP = 4-CDP-2-C-methyl-D-erythritol 2-phosphate + ADP + H(+). The protein operates within isoprenoid biosynthesis; isopentenyl diphosphate biosynthesis via DXP pathway; isopentenyl diphosphate from 1-deoxy-D-xylulose 5-phosphate: step 3/6. Its function is as follows. Catalyzes the phosphorylation of the position 2 hydroxy group of 4-diphosphocytidyl-2C-methyl-D-erythritol. The chain is 4-diphosphocytidyl-2-C-methyl-D-erythritol kinase from Herminiimonas arsenicoxydans.